Here is a 472-residue protein sequence, read N- to C-terminus: Ras-GEF domain-containing family member 1B (472 aa).

The N-terminal Ras-GEF domain maps to 34 to 164 (HDNNLLSGSL…MMQCLIRKLA (131 aa)). The region spanning 204-452 (DPYTLAQQLT…YLASYESEGP (249 aa)) is the Ras-GEF domain.

In terms of assembly, interacts with CCDC124 during cytokinesis. Interacts with Ras family proteins.

The protein localises to the early endosome. It is found in the late endosome. It localises to the midbody. Its function is as follows. Guanine nucleotide exchange factor (GEF) with specificity for RAP2A, it doesn't seems to activate other Ras family proteins (in vitro). This Pongo abelii (Sumatran orangutan) protein is Ras-GEF domain-containing family member 1B (RASGEF1B).